The sequence spans 492 residues: Probable malate:quinone oxidoreductase 1 (492 aa).

It belongs to the MQO family. The cofactor is FAD.

It carries out the reaction (S)-malate + a quinone = a quinol + oxaloacetate. It participates in carbohydrate metabolism; tricarboxylic acid cycle; oxaloacetate from (S)-malate (quinone route): step 1/1. This chain is Probable malate:quinone oxidoreductase 1, found in Staphylococcus epidermidis (strain ATCC 12228 / FDA PCI 1200).